A 469-amino-acid chain; its full sequence is Repressible acid phosphatase (469 aa).

Residues M1–A16 form the signal peptide. N-linked (GlcNAc...) asparagine glycans are attached at residues N23 and N31. H77 (nucleophile) is an active-site residue. 5 N-linked (GlcNAc...) asparagine glycosylation sites follow: N129, N201, N229, N250, and N317. Residue D340 is the Proton donor of the active site. N-linked (GlcNAc...) asparagine glycosylation is found at N392 and N447.

This sequence belongs to the histidine acid phosphatase family. In terms of processing, glycosylated during secretion across the membrane.

It localises to the secreted. The enzyme catalyses a phosphate monoester + H2O = an alcohol + phosphate. The chain is Repressible acid phosphatase (PHO5) from Kluyveromyces lactis (strain ATCC 8585 / CBS 2359 / DSM 70799 / NBRC 1267 / NRRL Y-1140 / WM37) (Yeast).